Here is a 170-residue protein sequence, read N- to C-terminus: Large ribosomal subunit protein bL17 (170 aa).

This sequence belongs to the bacterial ribosomal protein bL17 family. In terms of assembly, part of the 50S ribosomal subunit. Contacts protein L32.

In Azobacteroides pseudotrichonymphae genomovar. CFP2, this protein is Large ribosomal subunit protein bL17.